We begin with the raw amino-acid sequence, 101 residues long: Small ribosomal subunit protein uS14 (101 aa).

A disordered region spans residues 53-72 (RDAAAVRVRNRDSHDGRPRG). Basic and acidic residues predominate over residues 61-70 (RNRDSHDGRP).

Belongs to the universal ribosomal protein uS14 family. Part of the 30S ribosomal subunit. Contacts proteins S3 and S10.

Its function is as follows. Binds 16S rRNA, required for the assembly of 30S particles and may also be responsible for determining the conformation of the 16S rRNA at the A site. This Corynebacterium glutamicum (strain ATCC 13032 / DSM 20300 / JCM 1318 / BCRC 11384 / CCUG 27702 / LMG 3730 / NBRC 12168 / NCIMB 10025 / NRRL B-2784 / 534) protein is Small ribosomal subunit protein uS14.